The following is an 876-amino-acid chain: Neurotrypsin (876 aa).

Positions 1 to 20 are cleaved as a signal peptide; sequence MTLARFVLALMLGALPEVVG. Asn26 carries N-linked (GlcNAc...) asparagine glycosylation. The interval 29–89 is disordered; the sequence is LHHSHRHSPP…ALQAGHTPRP (61 aa). Residues 43–54 show a composition bias toward low complexity; it reads YPSYYLPTQQRP. A compositionally biased stretch (pro residues) spans 57-72; it reads TRPPPPLPRFPRPPRA. A Kringle domain is found at 94 to 166; sequence CPAGEPWVSV…GKVDWGYCDC (73 aa). 20 cysteine pairs are disulfide-bonded: Cys94–Cys166, Cys110–Cys150, Cys139–Cys164, Cys196–Cys260, Cys209–Cys270, Cys240–Cys250, Cys306–Cys370, Cys319–Cys380, Cys350–Cys360, Cys413–Cys476, Cys426–Cys486, Cys456–Cys466, Cys526–Cys590, Cys539–Cys600, Cys570–Cys580, Cys620–Cys751, Cys662–Cys678, Cys766–Cys832, Cys795–Cys809, and Cys822–Cys851. SRCR domains follow at residues 171–272, 281–382, 388–488, and 501–602; these read VRLR…TCSF, IRLA…SCTP, IRLA…ACYP, and VRLM…ICDY. A zymogen activation region region spans residues 620-631; sequence CGLRLLHRRQKR. The Peptidase S1 domain maps to 632–875; that stretch reads IIGGKNSLRG…FVPWIKSVTK (244 aa). His677 functions as the Charge relay system in the catalytic mechanism. Asn684 carries an N-linked (GlcNAc...) asparagine glycan. The Charge relay system role is filled by Asp727. Ser826 serves as the catalytic Charge relay system.

This sequence belongs to the peptidase S1 family.

Its subcellular location is the secreted. In terms of biological role, plays a role in neuronal plasticity and the proteolytic action may subserve structural reorganizations associated with learning and memory operations. The sequence is that of Neurotrypsin (PRSS12) from Gorilla gorilla gorilla (Western lowland gorilla).